A 322-amino-acid chain; its full sequence is Phosphatidylserine decarboxylase proenzyme (322 aa).

Active-site charge relay system; for autoendoproteolytic cleavage activity residues include D90, H147, and S254. S254 acts as the Schiff-base intermediate with substrate; via pyruvic acid; for decarboxylase activity in catalysis. S254 carries the post-translational modification Pyruvic acid (Ser); by autocatalysis. The segment at F290 to V322 is disordered. A compositionally biased stretch (basic and acidic residues) spans E308–V322.

The protein belongs to the phosphatidylserine decarboxylase family. PSD-B subfamily. Prokaryotic type I sub-subfamily. In terms of assembly, heterodimer of a large membrane-associated beta subunit and a small pyruvoyl-containing alpha subunit. Pyruvate is required as a cofactor. Is synthesized initially as an inactive proenzyme. Formation of the active enzyme involves a self-maturation process in which the active site pyruvoyl group is generated from an internal serine residue via an autocatalytic post-translational modification. Two non-identical subunits are generated from the proenzyme in this reaction, and the pyruvate is formed at the N-terminus of the alpha chain, which is derived from the carboxyl end of the proenzyme. The autoendoproteolytic cleavage occurs by a canonical serine protease mechanism, in which the side chain hydroxyl group of the serine supplies its oxygen atom to form the C-terminus of the beta chain, while the remainder of the serine residue undergoes an oxidative deamination to produce ammonia and the pyruvoyl prosthetic group on the alpha chain. During this reaction, the Ser that is part of the protease active site of the proenzyme becomes the pyruvoyl prosthetic group, which constitutes an essential element of the active site of the mature decarboxylase.

The protein localises to the cell membrane. The catalysed reaction is a 1,2-diacyl-sn-glycero-3-phospho-L-serine + H(+) = a 1,2-diacyl-sn-glycero-3-phosphoethanolamine + CO2. The protein operates within phospholipid metabolism; phosphatidylethanolamine biosynthesis; phosphatidylethanolamine from CDP-diacylglycerol: step 2/2. Functionally, catalyzes the formation of phosphatidylethanolamine (PtdEtn) from phosphatidylserine (PtdSer). The sequence is that of Phosphatidylserine decarboxylase proenzyme from Escherichia fergusonii (strain ATCC 35469 / DSM 13698 / CCUG 18766 / IAM 14443 / JCM 21226 / LMG 7866 / NBRC 102419 / NCTC 12128 / CDC 0568-73).